The following is a 55-amino-acid chain: MPQLLPTPWFTIFIYAWMVLLAVIPLKILSYVYPNHNYLRGLQKPSEHSWFWPWS.

Residues 4–24 (LLPTPWFTIFIYAWMVLLAVI) traverse the membrane as a helical segment.

The protein belongs to the ATPase protein 8 family. Component of the ATP synthase complex composed at least of ATP5F1A/subunit alpha, ATP5F1B/subunit beta, ATP5MC1/subunit c (homooctomer), MT-ATP6/subunit a, MT-ATP8/subunit 8, ATP5ME/subunit e, ATP5MF/subunit f, ATP5MG/subunit g, ATP5MK/subunit k, ATP5MJ/subunit j, ATP5F1C/subunit gamma, ATP5F1D/subunit delta, ATP5F1E/subunit epsilon, ATP5PF/subunit F6, ATP5PB/subunit b, ATP5PD/subunit d, ATP5PO/subunit OSCP. ATP synthase complex consists of a soluble F(1) head domain (subunits alpha(3) and beta(3)) - the catalytic core - and a membrane F(0) domain - the membrane proton channel (subunits c, a, 8, e, f, g, k and j). These two domains are linked by a central stalk (subunits gamma, delta, and epsilon) rotating inside the F1 region and a stationary peripheral stalk (subunits F6, b, d, and OSCP).

It localises to the mitochondrion membrane. Subunit 8, of the mitochondrial membrane ATP synthase complex (F(1)F(0) ATP synthase or Complex V) that produces ATP from ADP in the presence of a proton gradient across the membrane which is generated by electron transport complexes of the respiratory chain. ATP synthase complex consist of a soluble F(1) head domain - the catalytic core - and a membrane F(1) domain - the membrane proton channel. These two domains are linked by a central stalk rotating inside the F(1) region and a stationary peripheral stalk. During catalysis, ATP synthesis in the catalytic domain of F(1) is coupled via a rotary mechanism of the central stalk subunits to proton translocation. In vivo, can only synthesize ATP although its ATP hydrolase activity can be activated artificially in vitro. Part of the complex F(0) domain. The protein is ATP synthase F(0) complex subunit 8 of Dicentrarchus labrax (European seabass).